A 541-amino-acid polypeptide reads, in one-letter code: Chaperonin GroEL 2 (541 aa).

ATP-binding positions include 29–32 (TLGP), 86–90 (DGTTT), G413, 476–478 (NAA), and D492.

It belongs to the chaperonin (HSP60) family. In terms of assembly, forms a cylinder of 14 subunits composed of two heptameric rings stacked back-to-back. Interacts with the co-chaperonin GroES.

It localises to the cytoplasm. It carries out the reaction ATP + H2O + a folded polypeptide = ADP + phosphate + an unfolded polypeptide.. Its function is as follows. Together with its co-chaperonin GroES, plays an essential role in assisting protein folding. The GroEL-GroES system forms a nano-cage that allows encapsulation of the non-native substrate proteins and provides a physical environment optimized to promote and accelerate protein folding. This Streptomyces avermitilis (strain ATCC 31267 / DSM 46492 / JCM 5070 / NBRC 14893 / NCIMB 12804 / NRRL 8165 / MA-4680) protein is Chaperonin GroEL 2.